The sequence spans 782 residues: MSDQKKEEEEEAAAAMATEGGKTSEPENNNKKPKTSGSQDSHPSPLALLAATCSKIGTPGENQATGQQQIIIDPSQGLVQLQNQPQQLELVTTQLAGNAWQLVASTPPASKENNVSQPASSSSSSSSSNNGSSSPTKTKSGNPSTPNQFQVIQVQNPSGSVQYQVIPQLQTVEGQQIQINPTSSSSLQDLQGQIQLISAGNNQAILTAANRTASGNILAQNLANQTVPVQIRPGVSIPLQLQTLPGTQAQVVTTLPINIGGVTLALPVINNVTAGGGTGQVGQPTTTTDSGTSNGNQLVSTPTTSTAPASTMPESPSSSTTCTTTASTTLTSSDTLVSSADTGQYASTSASSSERTIEEPQTPAATESEAQSSSQLQSNGIQNAQDQSNSLQQVQIVGQPILQQIQIQQPQQQIIQAIPPQSFQLQSGQTIQTIQQQPLQNVQLQAVNPTQVLIRAPTLTPSGQISWQTVQVQNIQSLSNLQVQNAGLSQQLTITPVSSSGGTTLAQIAPVAVAGAPITLNTAQLASVPNLQTVSVANLGAAGVQVQGVPVTITSVAGQQQGQDGVKVQQATIAPVTVAVGGIANATIGAVSPDQLTQVHLQQGQQTSDAEVQPGKRLRRVACSCPNCREGEGRGSSEPGKKKQHVCHIEGCGKVYGKTSHLRAHLRWHTGERPFICNWMFCGKRFTRSDELQRHRRTHTGEKRFECPECSKRFMRSDHLSKHVKTHQNKKGGGTALAIVTSGELDSSVTEVLGSPRIVTVAAISQDSNPATPNVSTNMEEF.

3 disordered regions span residues 1–48, 107–148, and 275–385; these read MSDQ…PLAL, PPAS…TPNQ, and GGGT…QNAQ. Phosphoserine is present on Ser-44. A compositionally biased stretch (polar residues) spans 107-119; sequence PPASKENNVSQPA. Low complexity-rich tracts occupy residues 120–146 and 281–342; these read SSSSSSSSSNNGSSSPTKTKSGNPSTP and VGQP…SADT. Residues 344–354 are compositionally biased toward polar residues; it reads QYASTSASSSE. Residues 364-378 are compositionally biased toward low complexity; the sequence is AATESEAQSSSQLQS. The 9aaTAD; inactive signature appears at 465–473; that stretch reads ISWQTVQVQ. 3 consecutive C2H2-type zinc fingers follow at residues 645 to 669, 675 to 699, and 705 to 727; these read HVCHIEGCGKVYGKTSHLRAHLRWH, FICNWMFCGKRFTRSDELQRHRRTH, and FECPECSKRFMRSDHLSKHVKTH.

Belongs to the Sp1 C2H2-type zinc-finger protein family. In terms of tissue distribution, expressed in many tissues.

Its subcellular location is the nucleus. Binds to GT and GC boxes promoters elements. Probable transcriptional activator. Required for normal male reproductive behavior. This is Transcription factor Sp4 (Sp4) from Mus musculus (Mouse).